Here is a 315-residue protein sequence, read N- to C-terminus: UDP-N-acetylenolpyruvoylglucosamine reductase (315 aa).

An FAD-binding PCMH-type domain is found at 27–207; the sequence is RVGGPADVLY…TKRMNAITAR (181 aa). The active site involves R172. The segment at 214-236 is disordered; that stretch reads IREKTSGSTFANPDPPGTPNQRK. S221 functions as the Proton donor in the catalytic mechanism. The active site involves E297.

This sequence belongs to the MurB family. FAD serves as cofactor.

It is found in the cytoplasm. It carries out the reaction UDP-N-acetyl-alpha-D-muramate + NADP(+) = UDP-N-acetyl-3-O-(1-carboxyvinyl)-alpha-D-glucosamine + NADPH + H(+). It functions in the pathway cell wall biogenesis; peptidoglycan biosynthesis. Its function is as follows. Cell wall formation. The polypeptide is UDP-N-acetylenolpyruvoylglucosamine reductase (Maricaulis maris (strain MCS10) (Caulobacter maris)).